The sequence spans 336 residues: Mitochondrial fission regulator 2 (336 aa).

Residues 139 to 166 are a coiled coil; sequence QPDALLKISALEEELQRLRAQIATIITA. The segment at 296-336 is disordered; sequence HRQRDDSFGKENHSAEPSPFSSPDTPRIFQHTRRSQGRIHL. Positions 297–309 are enriched in basic and acidic residues; sequence RQRDDSFGKENHS. The span at 325-336 shows a compositional bias: basic residues; sequence QHTRRSQGRIHL.

It belongs to the MTFR1 family.

It localises to the mitochondrion. Its function is as follows. May play a role in mitochondrial aerobic respiration. Can also promote mitochondrial fission. This Danio rerio (Zebrafish) protein is Mitochondrial fission regulator 2 (mtfr2).